Here is a 427-residue protein sequence, read N- to C-terminus: Beta-1,3-galactosyl-O-glycosyl-glycoprotein beta-1,6-N-acetylglucosaminyltransferase (427 aa).

Residues 1 to 9 (MLRKLWRRK) lie on the Cytoplasmic side of the membrane. The tract at residues 5-9 (LWRRK) is mediates interaction with GOLPH3 and is necessary and sufficient for localization to the Golgi. Residues 10–32 (LFSFPTKYYFLFLAFSVVTFTVL) form a helical; Signal-anchor for type II membrane protein membrane-spanning segment. The segment at 33–121 (RIHQKTEFVN…EPLSKEEAGF (89 aa)) is stem region. Topologically, residues 33-427 (RIHQKTEFVN…RHKALETLKP (395 aa)) are lumenal. N-linked (GlcNAc...) asparagine glycans are attached at residues asparagine 58 and asparagine 95. 4 cysteine pairs are disulfide-bonded: cysteine 59-cysteine 412, cysteine 100-cysteine 172, cysteine 151-cysteine 199, and cysteine 372-cysteine 380. Positions 122–427 (PIAYSIVVHH…RHKALETLKP (306 aa)) are catalytic. UDP-N-acetyl-alpha-D-glucosamine contacts are provided by residues 128 to 130 (VVH), 155 to 157 (DAK), and tyrosine 187. 6 residues coordinate a glycoprotein: glutamate 243, lysine 251, arginine 254, glutamate 320, lysine 341, and tyrosine 358. Residue glutamate 320 is the Nucleophile of the active site. UDP-N-acetyl-alpha-D-glucosamine is bound by residues arginine 377 and lysine 400.

It belongs to the glycosyltransferase 14 family. As to quaternary structure, interacts with GOLPH3; may control GCNT1 retention in the Golgi. In terms of tissue distribution, expressed in tracheal submucosal glands and epithelium (at protein level).

The protein localises to the golgi apparatus membrane. It carries out the reaction a 3-O-[beta-D-galactosyl-(1-&gt;3)-N-acetyl-alpha-D-galactosaminyl]-L-seryl-[protein] + UDP-N-acetyl-alpha-D-glucosamine = 3-O-{beta-D-galactosyl-(1-&gt;3)-[N-acetyl-beta-D-glucosaminyl-(1-&gt;6)]-N-acetyl-alpha-D-galactosaminyl}-L-seryl-[protein] + UDP + H(+). The enzyme catalyses a 3-O-[beta-D-galactosyl-(1-&gt;3)-N-acetyl-alpha-D-galactosaminyl]-L-threonyl-[protein] + UDP-N-acetyl-alpha-D-glucosamine = a 3-O-{beta-D-galactosyl-(1-&gt;3)-[N-acetyl-beta-D-glucosaminyl-(1-&gt;6)]-N-acetyl-alpha-D-galactosaminyl}-L-threonyl-[protein] + UDP + H(+). It catalyses the reaction a globoside GalGb4Cer + UDP-N-acetyl-alpha-D-glucosamine = a globoside GlcNAc-(beta1-&gt;6)-GalGb4Cer + UDP + H(+). The catalysed reaction is a ganglioside GA1 + UDP-N-acetyl-alpha-D-glucosamine = a ganglioside beta-D-GlcNAc-(1-&gt;6)-GA1 + UDP + H(+). It participates in protein modification; protein glycosylation. Its pathway is glycolipid biosynthesis. Functionally, glycosyltransferase that catalyzes the transfer of an N-acetylglucosamine (GlcNAc) moiety in beta1-6 linkage from UDP-GlcNAc onto mucin-type core 1 O-glycan to form the branched mucin-type core 2 O-glycan. The catalysis is metal ion-independent and occurs with inversion of the anomeric configuration of sugar donor. Selectively involved in synthesis of mucin-type core 2 O-glycans that serve as scaffolds for the display of selectin ligand sialyl Lewis X epitope by myeloid cells, with an impact on homeostasis and recruitment to inflammatory sites. Can also act on glycolipid substrates. Transfers GlcNAc moiety to GalGb4Cer globosides in a reaction step to the synthesis of stage-specific embryonic antigen 1 (SSEA-1) determinant. Can use Galbeta1-3GalNAcalpha1- and Galbeta1-3GalNAcbeta1- oligosaccharide derivatives as acceptor substrates. The chain is Beta-1,3-galactosyl-O-glycosyl-glycoprotein beta-1,6-N-acetylglucosaminyltransferase (GCNT1) from Bos taurus (Bovine).